We begin with the raw amino-acid sequence, 60 residues long: Potassium channel toxin MeuTXKalpha3 (60 aa).

The signal sequence occupies residues M1 to C22. 3 disulfide bridges follow: C32-C50, C37-C55, and C41-C57. P59 is subject to Proline amide.

This sequence belongs to the short scorpion toxin superfamily. Potassium channel inhibitor family. Expressed by the venom gland.

The protein localises to the secreted. Functionally, may block voltage-gated potassium channels (Kv). The chain is Potassium channel toxin MeuTXKalpha3 from Mesobuthus eupeus (Lesser Asian scorpion).